We begin with the raw amino-acid sequence, 104 residues long: UPF0145 protein RD1_2695 (104 aa).

The protein belongs to the UPF0145 family.

The sequence is that of UPF0145 protein RD1_2695 from Roseobacter denitrificans (strain ATCC 33942 / OCh 114) (Erythrobacter sp. (strain OCh 114)).